The chain runs to 326 residues: Protein-arginine N-acetylglucosaminyltransferase NleB2 (326 aa).

Residues 45 to 47 (QWF), tyrosine 69, and 216 to 219 (YLDM) contribute to the UDP-N-acetyl-alpha-D-glucosamine site. The DXD motif signature appears at 218-220 (DMD). A Mn(2+)-binding site is contributed by aspartate 220. Glutamate 250 functions as the Proton acceptor in the catalytic mechanism. Mn(2+) is bound by residues asparagine 317 and serine 319. UDP-N-acetyl-alpha-D-glucosamine contacts are provided by residues serine 319 and 324–326 (SSW).

Belongs to the glycosyltransferase NleB family. Requires Mn(2+) as cofactor.

The protein resides in the secreted. Its subcellular location is the host cell. It carries out the reaction L-arginyl-[protein] + UDP-N-acetyl-alpha-D-glucosamine = N(omega)-(N-acetyl-beta-D-glucosaminyl)-L-arginyl-[protein] + UDP + H(+). Its function is as follows. Protein-arginine N-acetylglucosaminyltransferase effector that catalyzes the transfer of a single N-acetylglucosamine (GlcNAc) to a conserved arginine residue of host target proteins. In contrast to NleB1, not able to disrupt TNF signaling in infected cells. Shows a lower enzymatic activity than NleB1. The sequence is that of Protein-arginine N-acetylglucosaminyltransferase NleB2 from Escherichia coli O127:H6 (strain E2348/69 / EPEC).